The chain runs to 61 residues: MLNTFSLIGICLNSTLFSSSFFFGKLPEAYAFLNPIVDIMPVIPLFFFLLAFVWQAAVSFR.

Positions 1–24 (MLNTFSLIGICLNSTLFSSSFFFG) are excised as a propeptide. A helical membrane pass occupies residues 36-56 (IVDIMPVIPLFFFLLAFVWQA).

Belongs to the PsbK family. In terms of assembly, PSII is composed of 1 copy each of membrane proteins PsbA, PsbB, PsbC, PsbD, PsbE, PsbF, PsbH, PsbI, PsbJ, PsbK, PsbL, PsbM, PsbT, PsbX, PsbY, PsbZ, Psb30/Ycf12, at least 3 peripheral proteins of the oxygen-evolving complex and a large number of cofactors. It forms dimeric complexes.

It is found in the plastid. The protein localises to the chloroplast thylakoid membrane. Functionally, one of the components of the core complex of photosystem II (PSII). PSII is a light-driven water:plastoquinone oxidoreductase that uses light energy to abstract electrons from H(2)O, generating O(2) and a proton gradient subsequently used for ATP formation. It consists of a core antenna complex that captures photons, and an electron transfer chain that converts photonic excitation into a charge separation. The polypeptide is Photosystem II reaction center protein K (Nicotiana tomentosiformis (Tobacco)).